Consider the following 360-residue polypeptide: MDNYTVAPDDEYDVLILDDYLDNSGPDQVPAPEFLSPQQVLQFCCAVFAVGLLDNVLAVFILVKYKGLKNLGNIYFLNLALSNLCFLLPLPFWAHTAAHGESPGNGTCKVLVGLHSSGLYSEVFSNILLLVQGYRVFSQGRLASIFTTVSCGIVACILAWAMATALSLPESVFYEPRMERQKHKCAFGKPHFLPIEAPLWKYVLTSKMIILVLAFPLLVFIICCRQLRRRQSFRERQYDLHKPALVITGVFLLMWAPYNTVLFLSAFQEHLSLQDEKSSYHLDASVQVTQLVATTHCCVNPLLYLLLDRKAFMRYLRSLFPRCNDIPYQSSGGYQQAPPREGHGRPIELYSNLHQRQDII.

Topologically, residues 1–42 are extracellular; that stretch reads MDNYTVAPDDEYDVLILDDYLDNSGPDQVPAPEFLSPQQVLQ. Asn-3 carries N-linked (GlcNAc...) asparagine glycosylation. A helical transmembrane segment spans residues 43–63; sequence FCCAVFAVGLLDNVLAVFILV. Over 64–73 the chain is Cytoplasmic; that stretch reads KYKGLKNLGN. Residues 74–94 form a helical membrane-spanning segment; it reads IYFLNLALSNLCFLLPLPFWA. The Extracellular portion of the chain corresponds to 95–109; sequence HTAAHGESPGNGTCK. A glycan (N-linked (GlcNAc...) asparagine) is linked at Asn-105. A disulfide bridge connects residues Cys-108 and Cys-185. Residues 110 to 130 traverse the membrane as a helical segment; it reads VLVGLHSSGLYSEVFSNILLL. Residues 131–141 lie on the Cytoplasmic side of the membrane; that stretch reads VQGYRVFSQGR. A helical membrane pass occupies residues 142–162; the sequence is LASIFTTVSCGIVACILAWAM. Over 163 to 202 the chain is Extracellular; the sequence is ATALSLPESVFYEPRMERQKHKCAFGKPHFLPIEAPLWKY. A helical transmembrane segment spans residues 203–223; it reads VLTSKMIILVLAFPLLVFIIC. Residues 224-243 are Cytoplasmic-facing; it reads CRQLRRRQSFRERQYDLHKP. The chain crosses the membrane as a helical span at residues 244 to 264; that stretch reads ALVITGVFLLMWAPYNTVLFL. Residues 265–285 are Extracellular-facing; it reads SAFQEHLSLQDEKSSYHLDAS. A helical transmembrane segment spans residues 286–307; it reads VQVTQLVATTHCCVNPLLYLLL. Over 308–360 the chain is Cytoplasmic; sequence DRKAFMRYLRSLFPRCNDIPYQSSGGYQQAPPREGHGRPIELYSNLHQRQDII.

The protein belongs to the G-protein coupled receptor 1 family. As to expression, expressed in macrophages, astrocytes, in glial cells. Constitutively expressed by mast cells. Detected in bronchial epithelium in OVA-induced airway inflammation. Up-regulated during dendritic cell (DC) maturation.

It is found in the cell membrane. Its function is as follows. Receptor for CCL19 and chemerin/RARRES2. Does not appear to be a signaling receptor, but may have a role in modulating chemokine-triggered immune responses by capturing and internalizing CCL19 or by presenting RARRES2 ligand to CMKLR1, a functional signaling receptor. Plays a critical role for the development of Th2 responses. The sequence is that of C-C chemokine receptor-like 2 (Ccrl2) from Mus musculus (Mouse).